The sequence spans 141 residues: Hemoglobin subunit alpha-A (141 aa).

Positions 1–141 (VLSANDKTNV…VGNVLSAKYR (141 aa)) constitute a Globin domain. H58 contacts O2. H87 contacts heme b.

This sequence belongs to the globin family. In terms of assembly, heterotetramer of two alpha chains and two beta chains. Red blood cells.

In terms of biological role, involved in oxygen transport from the lung to the various peripheral tissues. This is Hemoglobin subunit alpha-A (HBAA) from Trigonoceps occipitalis (White-headed vulture).